A 2936-amino-acid polypeptide reads, in one-letter code: Neurobeachin (2936 aa).

The interval 961–985 (ENIKKGKKGNVSTISGLSSQTAGAK) is disordered. Residues 970 to 982 (NVSTISGLSSQTA) show a composition bias toward polar residues. A phosphoserine mark is found at Ser-1001 and Ser-1004. Polar residues-rich tracts occupy residues 1203 to 1220 (TSDG…SSTK) and 1231 to 1241 (TLETESSNSKA). Disordered stretches follow at residues 1203 to 1222 (TSDG…TKGL), 1231 to 1265 (TLET…ESGK), and 1270 to 1289 (IQTT…QQDR). Positions 1253–1265 (DTERSDDGKESGK) are enriched in basic and acidic residues. The segment covering 1270-1286 (IQTTATTQAVQGRSSTQ) has biased composition (polar residues). The stretch at 1316–1358 (TTMFRIPEFKWSPMHQRLLTDLLFALETDVHVWRSHSTKSVMD) is one WD 1 repeat. 4 disordered regions span residues 1480 to 1521 (QRDR…LSPI), 1639 to 1667 (PDTV…DSGM), 1701 to 1721 (VKKS…PAPS), and 1830 to 1850 (TGAV…VNGA). Ser-1519 carries the phosphoserine modification. Residues 1701–1714 (VKKSQESLTEHPSE) show a composition bias toward basic and acidic residues. Residues Ser-1704 and Ser-1707 each carry the phosphoserine modification. The segment covering 1835-1845 (SGSSSSSSSSS) has biased composition (low complexity). The residue at position 2128 (Ser-2128) is a Phosphoserine. Positions 2137-2245 (NLAGPVVLST…TVKKVVYSLP (109 aa)) constitute a BEACH-type PH domain. The region spanning 2264–2553 (ATPRQLYKSS…QLLIEPHPPR (290 aa)) is the BEACH domain. Position 2565 is a phosphoserine (Ser-2565). WD repeat units follow at residues 2708-2751 (GHWD…HIIG), 2768-2808 (GHDH…RALE), 2850-2889 (EIND…QLYI), and 2892-2931 (GCDA…WHYE).

It belongs to the WD repeat neurobeachin family. In terms of assembly, interacts with RII subunit of PKA. Forebrain, brainstem and cerebellum.

The protein localises to the membrane. It localises to the endomembrane system. The protein resides in the postsynaptic cell membrane. Its function is as follows. Binds to type II regulatory subunits of protein kinase A and anchors/targets them to the membrane. May anchor the kinase to cytoskeletal and/or organelle-associated proteins. May have a role in membrane trafficking. The chain is Neurobeachin (Nbea) from Mus musculus (Mouse).